Here is a 401-residue protein sequence, read N- to C-terminus: Elongation factor Tu 1 (401 aa).

Residues 10–209 enclose the tr-type G domain; the sequence is KPHVNVGTIG…AVDEYIPTPV (200 aa). Residues 19 to 26 are G1; that stretch reads GHVDHGKT. Residue 19-26 coordinates GTP; that stretch reads GHVDHGKT. Thr-26 contacts Mg(2+). The G2 stretch occupies residues 60–64; the sequence is GITIA. Residues 81 to 84 form a G3 region; sequence DCPG. GTP-binding positions include 81-85 and 136-139; these read DCPGH and NKVD. The segment at 136–139 is G4; sequence NKVD. Positions 174–176 are G5; that stretch reads SAL.

This sequence belongs to the TRAFAC class translation factor GTPase superfamily. Classic translation factor GTPase family. EF-Tu/EF-1A subfamily. In terms of assembly, monomer.

It localises to the cytoplasm. It carries out the reaction GTP + H2O = GDP + phosphate + H(+). Functionally, GTP hydrolase that promotes the GTP-dependent binding of aminoacyl-tRNA to the A-site of ribosomes during protein biosynthesis. The sequence is that of Elongation factor Tu 1 from Roseiflexus sp. (strain RS-1).